A 185-amino-acid chain; its full sequence is Protein PBP4 (185 aa).

Low complexity-rich tracts occupy residues 1 to 24 and 46 to 62; these read MTTTSTTSVDGRTSSTLKATLSAS and AQAAAKALPRQQQQQQQ. 2 disordered regions span residues 1–116 and 147–168; these read MTTT…YNRE and ETASGRVSTATDWGTVSSSKNK. Polar residues-rich tracts occupy residues 73-83, 91-102, and 147-166; these read PANTKTKTIAS, KGSSTANGSSTN, and ETASGRVSTATDWGTVSSSK.

In terms of assembly, interacts with IGO1, LSM12 and PBP1.

The protein resides in the cytoplasm. It is found in the nucleus. The chain is Protein PBP4 (PBP4) from Saccharomyces cerevisiae (strain ATCC 204508 / S288c) (Baker's yeast).